We begin with the raw amino-acid sequence, 139 residues long: Ribulose bisphosphate carboxylase small subunit (139 aa).

It belongs to the RuBisCO small chain family. As to quaternary structure, heterohexadecamer of 8 large and 8 small subunits.

It is found in the plastid. The protein resides in the chloroplast. RuBisCO catalyzes two reactions: the carboxylation of D-ribulose 1,5-bisphosphate, the primary event in carbon dioxide fixation, as well as the oxidative fragmentation of the pentose substrate in the photorespiration process. Both reactions occur simultaneously and in competition at the same active site. Although the small subunit is not catalytic it is essential for maximal activity. In Ectocarpus siliculosus (Brown alga), this protein is Ribulose bisphosphate carboxylase small subunit.